A 119-amino-acid chain; its full sequence is Beta-2-microglobulin (119 aa).

The N-terminal stretch at 1-20 is a signal peptide; the sequence is MARSVVVSLFVLLALAGLEA. The Ig-like C1-type domain occupies 25–114; that stretch reads PKIQVYSRHP…VTFQTPKTVK (90 aa).

The protein belongs to the beta-2-microglobulin family. As to quaternary structure, heterodimer of an alpha chain and a beta chain. Beta-2-microglobulin is the beta-chain of major histocompatibility complex class I molecules.

The protein localises to the secreted. Functionally, component of the class I major histocompatibility complex (MHC). Involved in the presentation of peptide antigens to the immune system. In Brachyteles arachnoides (Southern muriqui), this protein is Beta-2-microglobulin (B2M).